The sequence spans 679 residues: UvrABC system protein B (679 aa).

Residues 25-412 (QGVNSGEEFQ…EGKFIEQVIR (388 aa)) form the Helicase ATP-binding domain. 38 to 45 (GATGTGKT) contacts ATP. A Beta-hairpin motif is present at residues 91-114 (YYDYYQPEAYVPVSDTYIAKTASI). A Helicase C-terminal domain is found at 429–583 (QIDDLLSEIR…KKYNQINGIT (155 aa)). Residues 639–674 (PSLIDKLENKMKDAAKELNFEEAANLRDRIKKLRQK) enclose the UVR domain.

Belongs to the UvrB family. In terms of assembly, forms a heterotetramer with UvrA during the search for lesions. Interacts with UvrC in an incision complex.

It is found in the cytoplasm. In terms of biological role, the UvrABC repair system catalyzes the recognition and processing of DNA lesions. A damage recognition complex composed of 2 UvrA and 2 UvrB subunits scans DNA for abnormalities. Upon binding of the UvrA(2)B(2) complex to a putative damaged site, the DNA wraps around one UvrB monomer. DNA wrap is dependent on ATP binding by UvrB and probably causes local melting of the DNA helix, facilitating insertion of UvrB beta-hairpin between the DNA strands. Then UvrB probes one DNA strand for the presence of a lesion. If a lesion is found the UvrA subunits dissociate and the UvrB-DNA preincision complex is formed. This complex is subsequently bound by UvrC and the second UvrB is released. If no lesion is found, the DNA wraps around the other UvrB subunit that will check the other stand for damage. This Prochlorococcus marinus subsp. pastoris (strain CCMP1986 / NIES-2087 / MED4) protein is UvrABC system protein B.